The primary structure comprises 658 residues: UvrABC system protein B (658 aa).

The 389-residue stretch at 26–414 (AGLKKGLKHQ…PDVIEQIIRP (389 aa)) folds into the Helicase ATP-binding domain. 39 to 46 (GATGTGKT) contacts ATP. Residues 92-115 (YYDYYQPEAYVPQSDTYIEKDASI) carry the Beta-hairpin motif. The Helicase C-terminal domain occupies 430–592 (QIDDLMDEIN…ITPKTIRKEI (163 aa)). Positions 622 to 658 (DIFIEGMEHEMKEAAKALDFERAAELRDALLEIKAEG) constitute a UVR domain.

The protein belongs to the UvrB family. Forms a heterotetramer with UvrA during the search for lesions. Interacts with UvrC in an incision complex.

Its subcellular location is the cytoplasm. Its function is as follows. The UvrABC repair system catalyzes the recognition and processing of DNA lesions. A damage recognition complex composed of 2 UvrA and 2 UvrB subunits scans DNA for abnormalities. Upon binding of the UvrA(2)B(2) complex to a putative damaged site, the DNA wraps around one UvrB monomer. DNA wrap is dependent on ATP binding by UvrB and probably causes local melting of the DNA helix, facilitating insertion of UvrB beta-hairpin between the DNA strands. Then UvrB probes one DNA strand for the presence of a lesion. If a lesion is found the UvrA subunits dissociate and the UvrB-DNA preincision complex is formed. This complex is subsequently bound by UvrC and the second UvrB is released. If no lesion is found, the DNA wraps around the other UvrB subunit that will check the other stand for damage. This Listeria innocua serovar 6a (strain ATCC BAA-680 / CLIP 11262) protein is UvrABC system protein B.